Here is a 100-residue protein sequence, read N- to C-terminus: Protein Tat (100 aa).

Positions 1 to 24 (MDPIDPDLEPWKHPGSQPRTVCNN) are interaction with human CREBBP. The segment at 1-48 (MDPIDPDLEPWKHPGSQPRTVCNNCYCKACCYHCIYCFTKKGLGISYG) is transactivation. Residues Cys22, Cys25, and Cys27 each coordinate Zn(2+). The segment at 22–37 (CNNCYCKACCYHCIYC) is cysteine-rich. Lys28 carries the post-translational modification N6-acetyllysine; by host PCAF. Cys30, His33, Cys34, and Cys37 together coordinate Zn(2+). The segment at 38–48 (FTKKGLGISYG) is core. A compositionally biased stretch (basic residues) spans 48–58 (GRKKRTTRRRT). Residues 48-100 (GRKKRTTRRRTAPAGSKNNQDSIPKQPLSQSRGNKEGSEKSTKEVASKTEADQ) are disordered. The short motif at 49–57 (RKKRTTRRR) is the Nuclear localization signal, RNA-binding (TAR), and protein transduction element. The segment at 49–87 (RKKRTTRRRTAPAGSKNNQDSIPKQPLSQSRGNKEGSEK) is interaction with the host capping enzyme RNGTT. An N6-acetyllysine; by host EP300 and GCN5L2 mark is found at Lys50 and Lys51. The residue at position 52 (Arg52) is an Asymmetric dimethylarginine; by host PRMT6. A compositionally biased stretch (polar residues) spans 63–79 (SKNNQDSIPKQPLSQSR). Residue Lys72 forms a Glycyl lysine isopeptide (Lys-Gly) (interchain with G-Cter in ubiquitin) linkage. Residues 80-100 (GNKEGSEKSTKEVASKTEADQ) show a composition bias toward basic and acidic residues.

Belongs to the lentiviruses Tat family. Interacts with host CCNT1. Associates with the P-TEFb complex composed at least of Tat, P-TEFb (CDK9 and CCNT1), TAR RNA, RNA Pol II. Recruits the HATs CREBBP, TAF1/TFIID, EP300, PCAF and GCN5L2. Interacts with host KAT5/Tip60; this interaction targets the latter to degradation. Interacts with the host deacetylase SIRT1. Interacts with host capping enzyme RNGTT; this interaction stimulates RNGTT. Binds to host KDR, and to the host integrins ITGAV/ITGB3 and ITGA5/ITGB1. Interacts with host KPNB1/importin beta-1 without previous binding to KPNA1/importin alpha-1. Interacts with EIF2AK2. Interacts with host nucleosome assembly protein NAP1L1; this interaction may be required for the transport of Tat within the nucleus, since the two proteins interact at the nuclear rim. Interacts with host C1QBP/SF2P32; this interaction involves lysine-acetylated Tat. Interacts with the host chemokine receptors CCR2, CCR3 and CXCR4. Interacts with host DPP4/CD26; this interaction may trigger an anti-proliferative effect. Interacts with host LDLR. Interacts with the host extracellular matrix metalloproteinase MMP1. Interacts with host PRMT6; this interaction mediates Tat's methylation. Interacts with, and is ubiquitinated by MDM2/Hdm2. Interacts with host PSMC3 and HTATIP2. Interacts with STAB1; this interaction may overcome SATB1-mediated repression of IL2 and IL2RA (interleukin) in T cells by binding to the same domain than HDAC1. Interacts (when acetylated) with human CDK13, thereby increasing HIV-1 mRNA splicing and promoting the production of the doubly spliced HIV-1 protein Nef. Interacts with host TBP; this interaction modulates the activity of transcriptional pre-initiation complex. Interacts with host RELA. Post-translationally, asymmetrical arginine methylation by host PRMT6 seems to diminish the transactivation capacity of Tat and affects the interaction with host CCNT1. In terms of processing, acetylation by EP300, CREBBP, GCN5L2/GCN5 and PCAF regulates the transactivation activity of Tat. EP300-mediated acetylation of Lys-50 promotes dissociation of Tat from the TAR RNA through the competitive binding to PCAF's bromodomain. In addition, the non-acetylated Tat's N-terminus can also interact with PCAF. PCAF-mediated acetylation of Lys-28 enhances Tat's binding to CCNT1. Lys-50 is deacetylated by SIRT1. Polyubiquitination by host MDM2 does not target Tat to degradation, but activates its transactivation function and fosters interaction with CCNT1 and TAR RNA. Post-translationally, phosphorylated by EIF2AK2 on serine and threonine residues adjacent to the basic region important for TAR RNA binding and function. Phosphorylation of Tat by EIF2AK2 is dependent on the prior activation of EIF2AK2 by dsRNA.

It is found in the host nucleus. It localises to the host nucleolus. The protein resides in the host cytoplasm. Its subcellular location is the secreted. Its function is as follows. Transcriptional activator that increases RNA Pol II processivity, thereby increasing the level of full-length viral transcripts. Recognizes a hairpin structure at the 5'-LTR of the nascent viral mRNAs referred to as the transactivation responsive RNA element (TAR) and recruits the cyclin T1-CDK9 complex (P-TEFb complex) that will in turn hyperphosphorylate the RNA polymerase II to allow efficient elongation. The CDK9 component of P-TEFb and other Tat-activated kinases hyperphosphorylate the C-terminus of RNA Pol II that becomes stabilized and much more processive. Other factors such as HTATSF1/Tat-SF1, SUPT5H/SPT5, and HTATIP2 are also important for Tat's function. Besides its effect on RNA Pol II processivity, Tat induces chromatin remodeling of proviral genes by recruiting the histone acetyltransferases (HATs) CREBBP, EP300 and PCAF to the chromatin. This also contributes to the increase in proviral transcription rate, especially when the provirus integrates in transcriptionally silent region of the host genome. To ensure maximal activation of the LTR, Tat mediates nuclear translocation of NF-kappa-B by interacting with host RELA. Through its interaction with host TBP, Tat may also modulate transcription initiation. Tat can reactivate a latently infected cell by penetrating in it and transactivating its LTR promoter. In the cytoplasm, Tat is thought to act as a translational activator of HIV-1 mRNAs. Functionally, extracellular circulating Tat can be endocytosed by surrounding uninfected cells via the binding to several surface receptors such as CD26, CXCR4, heparan sulfate proteoglycans (HSPG) or LDLR. Neurons are rarely infected, but they internalize Tat via their LDLR. Through its interaction with nuclear HATs, Tat is potentially able to control the acetylation-dependent cellular gene expression. Modulates the expression of many cellular genes involved in cell survival, proliferation or in coding for cytokines or cytokine receptors. Tat plays a role in T-cell and neurons apoptosis. Tat induced neurotoxicity and apoptosis probably contribute to neuroAIDS. Circulating Tat also acts as a chemokine-like and/or growth factor-like molecule that binds to specific receptors on the surface of the cells, affecting many cellular pathways. In the vascular system, Tat binds to ITGAV/ITGB3 and ITGA5/ITGB1 integrins dimers at the surface of endothelial cells and competes with bFGF for heparin-binding sites, leading to an excess of soluble bFGF. This Pan (chimpanzees) protein is Protein Tat.